The chain runs to 360 residues: Replication-associated protein (360 aa).

The CRESS-DNA virus Rep endonuclease domain maps to 11 to 114; that stretch reads SHRNANTFLT…PLAVFERGTF (104 aa). Residues 18–21 carry the RCR-1 motif; it reads FLTY. Residues Glu-52, His-60, and His-62 each coordinate a divalent metal cation. The RCR-2 signature appears at 60-62; that stretch reads HLH. Catalysis depends on Tyr-100, which acts as the For DNA cleavage activity. The RCR-3 motif lies at 100 to 103; the sequence is YILK. Residue Glu-104 participates in a divalent metal cation binding. An oligomerization region spans residues 175-187; the sequence is SANKLFPEIQEEF. 229-236 serves as a coordination point for ATP; that stretch reads GPTRTGKS. A transactivation region spans residues 252–270; the sequence is VDWSSYNEDAIYNIVDDIP. The short motif at 292–303 is the Nuclear localization signal element; the sequence is KYGKKKKVQKKS.

This sequence belongs to the geminiviridae Rep protein family. As to quaternary structure, homooligomer. Rep binds to repeated DNA motifs (iterons). Forms the O-complex, which is a Rep-DNA complex involved in the initiation of RCR. Part of the C- and V-complexes which are RepA-Rep-DNA complexes involved in the c-sense and v-sense transcription. Requires Mg(2+) as cofactor. Mn(2+) is required as a cofactor.

The protein resides in the host nucleus. Functionally, essential for the replication of viral ssDNA. The closed circular ssDNA genome is first converted to a superhelical dsDNA. Rep binds a specific region at the genome origin of replication. It introduces an endonucleolytic nick within the conserved sequence 5'-TAATATTAC-3' in the intergenic region of the genome present in all geminiviruses, thereby initiating the rolling circle replication (RCR). Following cleavage, binds covalently to the 5'-phosphate of DNA as a tyrosyl ester. The cleavage gives rise to a free 3'-OH that serves as a primer for the cellular DNA polymerase. The polymerase synthesizes the (+) strand DNA by rolling circle mechanism. After one round of replication, a Rep-catalyzed nucleotidyl transfer reaction releases a circular single-stranded virus genome, thereby terminating the replication. Displays origin-specific DNA cleavage, nucleotidyl transferase, ATPase and helicase activities. Acts as an inhibitor of C-sense gene transcription. In Avena sativa (Oat), this protein is Replication-associated protein.